The sequence spans 357 residues: Glucose 1-dehydrogenase (357 aa).

Zn(2+) is bound at residue D38. Positions 40 and 49 each coordinate substrate. Residues H63 and E64 each contribute to the Zn(2+) site. Substrate contacts are provided by E114 and E150. Position 150 (E150) interacts with Zn(2+). Residues 181-184 (NGSL), 207-208 (RR), S228, 272-274 (LGV), and 301-303 (SVN) each bind NADP(+). N303 serves as a coordination point for substrate.

The protein belongs to the zinc-containing alcohol dehydrogenase family. Glucose 1-dehydrogenase subfamily. In terms of assembly, homodimer. Zn(2+) is required as a cofactor.

It carries out the reaction D-glucose + NAD(+) = D-glucono-1,5-lactone + NADH + H(+). The enzyme catalyses D-glucose + NADP(+) = D-glucono-1,5-lactone + NADPH + H(+). Activated by molar concentrations of KCl or NaCl. Inhibited by EDTA in vitro. Catalyzes the NAD(P)(+)-dependent oxidation of D-glucose to D-gluconate. Displays broad substrate specificity since it is able to catalyze the oxidation of a number of alternative aldose sugars, such as D-xylose, D-galactose, and D-fucose, to the corresponding glyconate. Can utilize both NAD(+) and NADP(+) as electron acceptor, with a preference for NADP(+). Physiologically, seems to be involved in the degradation of glucose through a modified Entner-Doudoroff pathway. The sequence is that of Glucose 1-dehydrogenase from Haloferax mediterranei (strain ATCC 33500 / DSM 1411 / JCM 8866 / NBRC 14739 / NCIMB 2177 / R-4) (Halobacterium mediterranei).